Reading from the N-terminus, the 92-residue chain is Small ribosomal subunit protein uS19 (92 aa).

This sequence belongs to the universal ribosomal protein uS19 family. In terms of assembly, part of the 30S ribosomal subunit.

Functionally, protein S19 forms a complex with S13 that binds strongly to the 16S ribosomal RNA. The chain is Small ribosomal subunit protein uS19 (rpsS) from Bacillus subtilis (strain 168).